The chain runs to 534 residues: EH domain-containing protein 1 (534 aa).

Methionine 1 is modified (N-acetylmethionine). One can recognise a Dynamin-type G domain in the interval 55–286; it reads FDNKPMVLLV…DLFKDIQSLP (232 aa). A G1 motif region spans residues 65 to 72; sequence GQYSTGKT. 65 to 72 is a binding site for ATP; the sequence is GQYSTGKT. Residues 91–92 form a G2 motif region; that stretch reads EP. Residues 153–156 are G3 motif; sequence DTPG. Positions 198–227 form a coiled coil; that stretch reads DEFSEVIKALKNHEDKIRVVLNKADQIETQ. A G4 motif region spans residues 219–222; that stretch reads NKAD. Lysine 220 provides a ligand contact to ATP. A region of interest (G5 motif) is located at residue isoleucine 243. Tryptophan 258 serves as a coordination point for ATP. Phosphoserine is present on residues serine 355 and serine 456. An EH domain is found at 444–532; it reads DKPTYDEIFY…PHLIPPSKRR (89 aa). The region spanning 476 to 511 is the EF-hand domain; that stretch reads LPNTVLGKIWKLADVDKDGLLDDEEFALANHLIKVK. Ca(2+) is bound by residues aspartate 489, aspartate 491, aspartate 493, and glutamate 500.

This sequence belongs to the TRAFAC class dynamin-like GTPase superfamily. Dynamin/Fzo/YdjA family. EHD subfamily. In terms of assembly, homooligomer, and heterooligomer with EHD2, EHD3 and EHD4, ATP-binding is required for heterooligomerization. Interacts (via EH domain) with MICALL1 (via NPF1 motif); the interaction is direct and recruits EHD1 to membranes. Interacts with RAB35; the interaction is indirect through MICALL1 and recruits EHD1 to membranes. Interacts (via EH domain) with PACSIN2 (via NPF motifs); regulates localization to tubular recycling endosome membranes. Interacts with PACSIN1. Interacts with RAB8A. Interacts with FER1L5 (via second C2 domain). Interacts with MYOF. Interacts with ZFYVE20. Interacts (via EH domain) with RAB11FIP2.

It localises to the recycling endosome membrane. It is found in the early endosome membrane. The protein localises to the cell membrane. Its subcellular location is the cell projection. The protein resides in the cilium membrane. Functionally, ATP- and membrane-binding protein that controls membrane reorganization/tubulation upon ATP hydrolysis. In vitro causes vesiculation of endocytic membranes. Acts in early endocytic membrane fusion and membrane trafficking of recycling endosomes. Recruited to endosomal membranes upon nerve growth factor stimulation, indirectly regulates neurite outgrowth. Plays a role in myoblast fusion. Involved in the unidirectional retrograde dendritic transport of endocytosed BACE1 and in efficient sorting of BACE1 to axons implicating a function in neuronal APP processing. Plays a role in the formation of the ciliary vesicle (CV), an early step in cilium biogenesis. Proposed to be required for the fusion of distal appendage vesicles (DAVs) to form the CV by recruiting SNARE complex component SNAP29. Is required for recruitment of transition zone proteins CEP290, RPGRIP1L, TMEM67 and B9D2, and of IFT20 following DAV reorganization before Rab8-dependent ciliary membrane extension. Required for the loss of CCP110 form the mother centriole essential for the maturation of the basal body during ciliogenesis. This Rattus norvegicus (Rat) protein is EH domain-containing protein 1.